The chain runs to 88 residues: Putative membrane protein insertion efficiency factor (88 aa).

Residues 66–88 (DFVPPKKDKNADSEHSCKAHHHH) are disordered. Residues 69-82 (PPKKDKNADSEHSC) are compositionally biased toward basic and acidic residues.

The protein belongs to the UPF0161 family.

It localises to the cell membrane. Could be involved in insertion of integral membrane proteins into the membrane. The chain is Putative membrane protein insertion efficiency factor from Listeria monocytogenes serotype 4a (strain HCC23).